The chain runs to 316 residues: GTP cyclohydrolase FolE2 1 (316 aa).

This sequence belongs to the GTP cyclohydrolase IV family.

It catalyses the reaction GTP + H2O = 7,8-dihydroneopterin 3'-triphosphate + formate + H(+). The protein operates within cofactor biosynthesis; 7,8-dihydroneopterin triphosphate biosynthesis; 7,8-dihydroneopterin triphosphate from GTP: step 1/1. Functionally, converts GTP to 7,8-dihydroneopterin triphosphate. The chain is GTP cyclohydrolase FolE2 1 from Burkholderia lata (strain ATCC 17760 / DSM 23089 / LMG 22485 / NCIMB 9086 / R18194 / 383).